The sequence spans 81 residues: Photosystem I iron-sulfur center (81 aa).

2 4Fe-4S ferredoxin-type domains span residues 2–31 (SHSV…MIPW) and 39–68 (IAPA…VRVY). The [4Fe-4S] cluster site is built by C11, C14, C17, C21, C48, C51, C54, and C58.

In terms of assembly, the eukaryotic PSI reaction center is composed of at least 11 subunits. It depends on [4Fe-4S] cluster as a cofactor.

The protein localises to the plastid. The protein resides in the chloroplast thylakoid membrane. It catalyses the reaction reduced [plastocyanin] + hnu + oxidized [2Fe-2S]-[ferredoxin] = oxidized [plastocyanin] + reduced [2Fe-2S]-[ferredoxin]. In terms of biological role, apoprotein for the two 4Fe-4S centers FA and FB of photosystem I (PSI); essential for photochemical activity. FB is the terminal electron acceptor of PSI, donating electrons to ferredoxin. The C-terminus interacts with PsaA/B/D and helps assemble the protein into the PSI complex. Required for binding of PsaD and PsaE to PSI. PSI is a plastocyanin-ferredoxin oxidoreductase, converting photonic excitation into a charge separation, which transfers an electron from the donor P700 chlorophyll pair to the spectroscopically characterized acceptors A0, A1, FX, FA and FB in turn. The polypeptide is Photosystem I iron-sulfur center (Chloranthus spicatus (Chulantree)).